Here is a 502-residue protein sequence, read N- to C-terminus: UTP--glucose-1-phosphate uridylyltransferase 2 (502 aa).

Residues 1–20 (MMKPDLNSPLPQSPQLQAFG) are disordered. The span at 9-20 (PLPQSPQLQAFG) shows a compositional bias: polar residues. Residues 114–117 (LNGG), Lys128, Gln191, and Gly220 contribute to the UTP site. Residue 116–117 (GG) coordinates substrate. Residues His221 and 249–251 (NVD) contribute to the substrate site. The UTP site is built by Asp251 and Lys390.

It belongs to the UDPGP type 1 family.

It carries out the reaction alpha-D-glucose 1-phosphate + UTP + H(+) = UDP-alpha-D-glucose + diphosphate. Its function is as follows. Plays a central role as a glucosyl donor in cellular metabolic pathways. The sequence is that of UTP--glucose-1-phosphate uridylyltransferase 2 (ugpB) from Dictyostelium discoideum (Social amoeba).